Reading from the N-terminus, the 278-residue chain is NADPH-dependent 7-cyano-7-deazaguanine reductase (278 aa).

87 to 89 contributes to the substrate binding site; the sequence is IES. 89–90 is a binding site for NADPH; sequence SK. The active-site Thioimide intermediate is the Cys-185. Asp-192 serves as the catalytic Proton donor. 224–225 is a binding site for substrate; that stretch reads HE. 253 to 254 contacts NADPH; it reads RG. The tract at residues 255 to 278 is disordered; the sequence is GLDINPYRSTNPTFSVQNHRSFRQ. The span at 261-278 shows a compositional bias: polar residues; that stretch reads YRSTNPTFSVQNHRSFRQ.

The protein belongs to the GTP cyclohydrolase I family. QueF type 2 subfamily. As to quaternary structure, homodimer.

It is found in the cytoplasm. The enzyme catalyses 7-aminomethyl-7-carbaguanine + 2 NADP(+) = 7-cyano-7-deazaguanine + 2 NADPH + 3 H(+). Its pathway is tRNA modification; tRNA-queuosine biosynthesis. In terms of biological role, catalyzes the NADPH-dependent reduction of 7-cyano-7-deazaguanine (preQ0) to 7-aminomethyl-7-deazaguanine (preQ1). The protein is NADPH-dependent 7-cyano-7-deazaguanine reductase of Coxiella burnetii (strain Dugway 5J108-111).